A 252-amino-acid chain; its full sequence is Ribosome assembly factor mrt4 (252 aa).

It belongs to the universal ribosomal protein uL10 family. Associates with the pre-60S ribosomal particle.

It localises to the nucleus. The protein resides in the nucleolus. The protein localises to the cytoplasm. In terms of biological role, component of the ribosome assembly machinery. Nuclear paralog of the ribosomal protein P0, it binds pre-60S subunits at an early stage of assembly in the nucleolus, and is replaced by P0 in cytoplasmic pre-60S subunits and mature 80S ribosomes. This is Ribosome assembly factor mrt4 from Neurospora crassa (strain ATCC 24698 / 74-OR23-1A / CBS 708.71 / DSM 1257 / FGSC 987).